The sequence spans 477 residues: MNAAVKALHENDYLVADLSLAAWGRKEIRIAETEMPGLMAIREEFAAKQPLKGARVTGSLHMTIQTAVLVETLQALGAQVRWASCNIFSTQDHAAAALAVQGTPVFAYKGETLADYWDYTHRIFEFGAAGTDGEGPNMILDDGGDATLLMHLGKRAEKDLSLLDNPKSEEETCLYAAIRAKLAVDPTWYSRKGAQIIGVTEETTTGVHRLKEMSAAGTLLFRAINVNDSVTKSKFDNLYGCRESLVDGIKRATDVMIAGKVACVAGYGDVGKGSAQALRALSAQVWVTEIDPINALQAAMEGYKVVTMEYAADKADIFVTTTGNRDVIRHEHMAAMKDQAIVCNIGHFDNEIDVASLEGYEWDEIKPQVDHIIFPDGKKIILLAKGRLVNLGCATGHPSFVMSSSFANQTIAQIELFCHPDGYDVGKVYVLPKHLDEKVARLHLKKVGAMLTELTDDQAAYIGVPKNGPYKPDTYRY.

Substrate is bound by residues threonine 63, aspartate 142, and glutamate 202. An NAD(+)-binding site is contributed by 203–205; sequence TTT. Substrate-binding residues include lysine 232 and aspartate 236. Residues asparagine 237, 266 to 271, glutamate 289, asparagine 324, 345 to 347, and asparagine 390 contribute to the NAD(+) site; these read GYGDVG and IGH.

Belongs to the adenosylhomocysteinase family. The cofactor is NAD(+).

The protein resides in the cytoplasm. It carries out the reaction S-adenosyl-L-homocysteine + H2O = L-homocysteine + adenosine. It functions in the pathway amino-acid biosynthesis; L-homocysteine biosynthesis; L-homocysteine from S-adenosyl-L-homocysteine: step 1/1. May play a key role in the regulation of the intracellular concentration of adenosylhomocysteine. This is Adenosylhomocysteinase from Leptothrix cholodnii (strain ATCC 51168 / LMG 8142 / SP-6) (Leptothrix discophora (strain SP-6)).